We begin with the raw amino-acid sequence, 545 residues long: MAAYAWLYCALALGATWYLQRYLRQRDAYSVLRNIPGPPSYSWAKGHINQYFNPRGQAFHEEVALNYGSVVKLDGMFGSKLFYVADPKALHTILIKEENTWEEPDAFLALNQLMFGDCLVGTLGEHHRRQRKMLNPVFSVNHMRHMLPIFYNVILKLREVILAKVKAGESEIDVLEWSGRAALELIGQGGLGYSFDPLLVNSESRNEYGDALKSCFPALSKVDILRRYAHYLIKMGPRWFRRSVVDMYPNPDVQNIKEVVDTMSAKSYEIFNQKKVALKRGDEAVLRQVGEGKDIMSILIKANTAASEDERLPESELIAQMSLLVFAATDTTSNTLARILQLLAEHQEIQVKLRDEILQSSAGGNDISYEELNRLRLLDAVCRETLRLFPPVTTLRRVPRKDSVLPLSEPIYGVDGRVINEIPVAKGTDVIIGTYGVNVRKQLWGEDSLEWKPERWLSPLPSAVTAAAIPGVYSNIMTFLGGKRACIGFKFSEMEMKVVLAVMLSTFTFERTEKVIQWNIAGVSYPTVEGNSQPQLPLKMGLYRP.

Positions 1 to 14 (MAAYAWLYCALALG) are cleaved as a signal peptide. Residue Cys486 participates in heme binding.

The protein belongs to the cytochrome P450 family. Requires heme as cofactor.

It participates in secondary metabolite biosynthesis. Its function is as follows. Cytochrome P450 monooxygenase that is able to use anthracene and pyrene as substrates for oxidation. The polypeptide is Cytochrome P450 monooxygenase 212 (Postia placenta (strain ATCC 44394 / Madison 698-R) (Brown rot fungus)).